The following is a 140-amino-acid chain: MSMKYLMLLFAAMIIRSFADSGNAIETTSPEITNATTDIPAIRLCGPEGDGYCLHGDCIHARDIDGMYCRCSHGYTGIRCQHVVLVDYQRSENPNTTTSYIPSPGIMLVLVGIIIITCCLLSVYRFTRRTKLPIQDMVVP.

Residues 1 to 18 (MSMKYLMLLFAAMIIRSF) form the signal peptide. The Extracellular segment spans residues 19 to 100 (ADSGNAIETT…SENPNTTTSY (82 aa)). A glycan (N-linked (GlcNAc...) asparagine; by host) is linked at N34. The region spanning 41-81 (AIRLCGPEGDGYCLHGDCIHARDIDGMYCRCSHGYTGIRCQ) is the EGF-like domain. Intrachain disulfides connect C45-C58, C53-C69, and C71-C80. The N-linked (GlcNAc...) asparagine; by host glycan is linked to N95. Residues 101-121 (IPSPGIMLVLVGIIIITCCLL) traverse the membrane as a helical segment. Residues 122–140 (SVYRFTRRTKLPIQDMVVP) lie on the Cytoplasmic side of the membrane.

This sequence belongs to the orthopoxvirus OPG019 family. Viral epidermal growth factor interacts with host EGFR and promotes EGFR dimerization. Cleaved at the cell surface by host ADAM10, thereby releasing the secreted form of VGF.

The protein resides in the host membrane. Its subcellular location is the secreted. Functionally, stimulates cellular proliferation (hyperplasia)and mobility around infected cells to promote rapid and efficient spread of infection. This effect is beneficial for virus replication in vivo, because poxviruses replicate possibly better in proliferating cells than in quiescent cells. Acts by binding host EGFR, inducing its dimerization, autophosphorylation and leading to activation of several cellular pathways regulating cell proliferation or cell survival. The activation by host EGFR of mitogen activated protein kinases (MAPK) and extracellular-signal regulated kinases (ERK) are essential for the positive effect of vaccinia growth factor on poxvirus virulence in vivo. This chain is Pro-Viral epidermal growth factor (OPG019), found in Bos taurus (Bovine).